A 427-amino-acid polypeptide reads, in one-letter code: Aspartate aminotransferase, mitochondrial (427 aa).

Residues 1 to 26 (MALLKSRLLVGVARCQPCLAAVQGRA) constitute a mitochondrion transit peptide. Residues glycine 62, tryptophan 159, and asparagine 212 each contribute to the substrate site. Lysine 276 bears the N6-(pyridoxal phosphate)lysine mark. Arginine 404 serves as a coordination point for substrate.

The protein belongs to the class-I pyridoxal-phosphate-dependent aminotransferase family. In terms of assembly, homodimer. Pyridoxal 5'-phosphate is required as a cofactor.

It is found in the mitochondrion matrix. The catalysed reaction is L-aspartate + 2-oxoglutarate = oxaloacetate + L-glutamate. The enzyme catalyses L-kynurenine + 2-oxoglutarate = kynurenate + L-glutamate + H2O. Its function is as follows. Catalyzes the irreversible transamination of the L-tryptophan metabolite L-kynurenine to form kynurenic acid (KA). As a member of the malate-aspartate shuttle, it has a key role in the intracellular NAD(H) redox balance. Is important for metabolite exchange between mitochondria and cytosol, and for amino acid metabolism. This is Aspartate aminotransferase, mitochondrial (got2) from Xenopus tropicalis (Western clawed frog).